A 589-amino-acid chain; its full sequence is DNA mismatch repair protein MutL (589 aa).

Disordered regions lie at residues 330–355 (LQRREAPQRPEPARPYTTPPPSSHRE) and 374–394 (RIYEQPEPYRPPEPPAASEPT). Positions 331–341 (QRREAPQRPEP) are enriched in basic and acidic residues. The segment covering 381–390 (PYRPPEPPAA) has biased composition (pro residues).

This sequence belongs to the DNA mismatch repair MutL/HexB family.

Functionally, this protein is involved in the repair of mismatches in DNA. It is required for dam-dependent methyl-directed DNA mismatch repair. May act as a 'molecular matchmaker', a protein that promotes the formation of a stable complex between two or more DNA-binding proteins in an ATP-dependent manner without itself being part of a final effector complex. The protein is DNA mismatch repair protein MutL of Trichlorobacter lovleyi (strain ATCC BAA-1151 / DSM 17278 / SZ) (Geobacter lovleyi).